Consider the following 566-residue polypeptide: Proline--tRNA ligase (566 aa).

Belongs to the class-II aminoacyl-tRNA synthetase family. ProS type 1 subfamily. Homodimer.

The protein resides in the cytoplasm. The enzyme catalyses tRNA(Pro) + L-proline + ATP = L-prolyl-tRNA(Pro) + AMP + diphosphate. In terms of biological role, catalyzes the attachment of proline to tRNA(Pro) in a two-step reaction: proline is first activated by ATP to form Pro-AMP and then transferred to the acceptor end of tRNA(Pro). As ProRS can inadvertently accommodate and process non-cognate amino acids such as alanine and cysteine, to avoid such errors it has two additional distinct editing activities against alanine. One activity is designated as 'pretransfer' editing and involves the tRNA(Pro)-independent hydrolysis of activated Ala-AMP. The other activity is designated 'posttransfer' editing and involves deacylation of mischarged Ala-tRNA(Pro). The misacylated Cys-tRNA(Pro) is not edited by ProRS. The chain is Proline--tRNA ligase from Bacillus cereus (strain Q1).